Here is a 301-residue protein sequence, read N- to C-terminus: Probable alpha-L-glutamate ligase (301 aa).

An ATP-grasp domain is found at 104-287; the sequence is LQLLSRRGIG…VAGIIIEHIE (184 aa). ATP contacts are provided by residues lysine 141, 178 to 179, aspartate 187, and 211 to 213; these read EY and RSN. Mg(2+) is bound by residues aspartate 248, glutamate 260, and asparagine 262. The Mn(2+) site is built by aspartate 248, glutamate 260, and asparagine 262.

It belongs to the RimK family. Mg(2+) serves as cofactor. It depends on Mn(2+) as a cofactor.

In Pseudomonas fluorescens (strain ATCC BAA-477 / NRRL B-23932 / Pf-5), this protein is Probable alpha-L-glutamate ligase.